The chain runs to 997 residues: FHIP family protein CPIJ015043 (997 aa).

Disordered stretches follow at residues 558 to 579 (DHRSSQCQSPAQQHLHQQQQLQ) and 759 to 922 (NVVL…GGAA). Low complexity predominate over residues 569-579 (QQHLHQQQQLQ). Residues 763–780 (GGSGPGGPRLSNGGGGTG) are compositionally biased toward gly residues. 2 stretches are compositionally biased toward low complexity: residues 781–792 (SSITSSLSQTTP) and 830–889 (GSNS…MVGS). Over residues 911-922 (IGSGTVGGGGAA) the composition is skewed to gly residues.

It belongs to the FHIP family.

This is FHIP family protein CPIJ015043 from Culex quinquefasciatus (Southern house mosquito).